The chain runs to 325 residues: Lipoyl synthase (325 aa).

[4Fe-4S] cluster is bound by residues cysteine 68, cysteine 73, cysteine 79, cysteine 94, cysteine 98, cysteine 101, and serine 308. The Radical SAM core domain occupies 80-297 (FGGGTATFMI…ARVANELGFT (218 aa)).

This sequence belongs to the radical SAM superfamily. Lipoyl synthase family. [4Fe-4S] cluster serves as cofactor.

Its subcellular location is the cytoplasm. The enzyme catalyses [[Fe-S] cluster scaffold protein carrying a second [4Fe-4S](2+) cluster] + N(6)-octanoyl-L-lysyl-[protein] + 2 oxidized [2Fe-2S]-[ferredoxin] + 2 S-adenosyl-L-methionine + 4 H(+) = [[Fe-S] cluster scaffold protein] + N(6)-[(R)-dihydrolipoyl]-L-lysyl-[protein] + 4 Fe(3+) + 2 hydrogen sulfide + 2 5'-deoxyadenosine + 2 L-methionine + 2 reduced [2Fe-2S]-[ferredoxin]. It functions in the pathway protein modification; protein lipoylation via endogenous pathway; protein N(6)-(lipoyl)lysine from octanoyl-[acyl-carrier-protein]: step 2/2. Its function is as follows. Catalyzes the radical-mediated insertion of two sulfur atoms into the C-6 and C-8 positions of the octanoyl moiety bound to the lipoyl domains of lipoate-dependent enzymes, thereby converting the octanoylated domains into lipoylated derivatives. The protein is Lipoyl synthase of Alcanivorax borkumensis (strain ATCC 700651 / DSM 11573 / NCIMB 13689 / SK2).